The primary structure comprises 201 residues: Ras-related protein Rab-9B (201 aa).

10 residues coordinate GTP: Val-18, Gly-19, Lys-20, Ser-21, Ser-22, Asp-33, Ser-34, Ala-36, His-38, and Thr-39. Ser-21 contributes to the Mg(2+) binding site. Residues 31-42 (KFDSQAFHTIGV) carry the Switch 1 motif. Ser-34 bears the Phosphoserine mark. Residues Thr-39 and Asp-62 each contribute to the Mg(2+) site. The short motif at 64 to 78 (AGQERFKSLRTPFYR) is the Switch 2 element. The GTP site is built by Gly-65, Asn-124, Lys-125, Ala-155, and Lys-156. 2 S-geranylgeranyl cysteine lipidation sites follow: Cys-200 and Cys-201.

This sequence belongs to the small GTPase superfamily. Rab family. In terms of assembly, interacts (GTP-bound form) with SGSM1; the GDP-bound form has much lower affinity for SGSM1. The GTP-bound form but not the GDP-bound form interacts with HPS4 and the BLOC-3 complex (heterodimer of HPS1 and HPS4) but does not interact with HPS1 alone. Interacts (GTP-bound form) with NDE1. Requires Mg(2+) as cofactor. Ubiquitous.

The protein resides in the cell membrane. It is found in the cytoplasmic vesicle. Its subcellular location is the phagosome. It localises to the phagosome membrane. The catalysed reaction is GTP + H2O = GDP + phosphate + H(+). Its activity is regulated as follows. Regulated by guanine nucleotide exchange factors (GEFs) which promote the exchange of bound GDP for free GTP. Regulated by GTPase activating proteins (GAPs) which increase the GTP hydrolysis activity. Inhibited by GDP dissociation inhibitors (GDIs). In terms of biological role, the small GTPases Rab are key regulators of intracellular membrane trafficking, from the formation of transport vesicles to their fusion with membranes. Rabs cycle between an inactive GDP-bound form and an active GTP-bound form that is able to recruit to membranes different sets of downstream effectors directly responsible for vesicle formation, movement, tethering and fusion. RAB9B is involved in the transport of proteins between the endosomes and the trans Golgi network. May use NDE1/NDEL1 as an effector to interact with the dynein motor complex in order to control retrograde trafficking of RAB9-associated late endosomes to the TGN. The protein is Ras-related protein Rab-9B of Homo sapiens (Human).